The sequence spans 416 residues: Probable intermembrane transport protein HI_1671 (416 aa).

8 helical membrane-spanning segments follow: residues 62 to 82 (ILIL…LLGI), 107 to 127 (IFIC…MLWL), 138 to 158 (VLLF…LVAL), 172 to 192 (EINI…LLFI), 263 to 283 (LIAG…GIYL), 306 to 326 (FVAF…IFIM), 347 to 367 (LLHL…VLAL), and 377 to 397 (IINF…FCTM).

It belongs to the PqiA family.

The protein resides in the cell inner membrane. In Haemophilus influenzae (strain ATCC 51907 / DSM 11121 / KW20 / Rd), this protein is Probable intermembrane transport protein HI_1671.